A 355-amino-acid chain; its full sequence is UDP-N-acetylglucosamine--N-acetylmuramyl-(pentapeptide) pyrophosphoryl-undecaprenol N-acetylglucosamine transferase (355 aa).

UDP-N-acetyl-alpha-D-glucosamine-binding positions include 11 to 13, N120, R161, S188, and Q280; that span reads TGG.

Belongs to the glycosyltransferase 28 family. MurG subfamily.

The protein localises to the cell inner membrane. The enzyme catalyses di-trans,octa-cis-undecaprenyl diphospho-N-acetyl-alpha-D-muramoyl-L-alanyl-D-glutamyl-meso-2,6-diaminopimeloyl-D-alanyl-D-alanine + UDP-N-acetyl-alpha-D-glucosamine = di-trans,octa-cis-undecaprenyl diphospho-[N-acetyl-alpha-D-glucosaminyl-(1-&gt;4)]-N-acetyl-alpha-D-muramoyl-L-alanyl-D-glutamyl-meso-2,6-diaminopimeloyl-D-alanyl-D-alanine + UDP + H(+). It functions in the pathway cell wall biogenesis; peptidoglycan biosynthesis. Cell wall formation. Catalyzes the transfer of a GlcNAc subunit on undecaprenyl-pyrophosphoryl-MurNAc-pentapeptide (lipid intermediate I) to form undecaprenyl-pyrophosphoryl-MurNAc-(pentapeptide)GlcNAc (lipid intermediate II). The polypeptide is UDP-N-acetylglucosamine--N-acetylmuramyl-(pentapeptide) pyrophosphoryl-undecaprenol N-acetylglucosamine transferase (Prochlorococcus marinus (strain MIT 9211)).